Consider the following 152-residue polypeptide: Ribosome maturation factor RimP (152 aa).

It belongs to the RimP family.

It localises to the cytoplasm. Functionally, required for maturation of 30S ribosomal subunits. This Proteus mirabilis (strain HI4320) protein is Ribosome maturation factor RimP.